The following is a 318-amino-acid chain: NADH-ubiquinone oxidoreductase chain 1 (318 aa).

A run of 9 helical transmembrane segments spans residues Phe-2–Leu-22, Pro-37–Ile-57, Leu-69–Met-89, Leu-100–Gly-120, Val-136–Met-156, His-171–Ala-191, Ile-231–Phe-251, Glu-253–Val-273, and Phe-293–Gly-313.

This sequence belongs to the complex I subunit 1 family. In terms of assembly, core subunit of respiratory chain NADH dehydrogenase (Complex I) which is composed of 45 different subunits.

The protein localises to the mitochondrion inner membrane. It catalyses the reaction a ubiquinone + NADH + 5 H(+)(in) = a ubiquinol + NAD(+) + 4 H(+)(out). In terms of biological role, core subunit of the mitochondrial membrane respiratory chain NADH dehydrogenase (Complex I) which catalyzes electron transfer from NADH through the respiratory chain, using ubiquinone as an electron acceptor. Essential for the catalytic activity and assembly of complex I. The sequence is that of NADH-ubiquinone oxidoreductase chain 1 (MT-ND1) from Zaedyus pichiy (Pichi).